Reading from the N-terminus, the 335-residue chain is Flagellar P-ring protein (335 aa).

An N-terminal signal peptide occupies residues 1–24 (MNKITNFLILSAVLFFSLIESANA).

It belongs to the FlgI family. In terms of assembly, the basal body constitutes a major portion of the flagellar organelle and consists of four rings (L,P,S, and M) mounted on a central rod.

The protein localises to the periplasm. It is found in the bacterial flagellum basal body. Assembles around the rod to form the L-ring and probably protects the motor/basal body from shearing forces during rotation. This Bdellovibrio bacteriovorus (strain ATCC 15356 / DSM 50701 / NCIMB 9529 / HD100) protein is Flagellar P-ring protein.